A 348-amino-acid polypeptide reads, in one-letter code: Mycothiol acetyltransferase (348 aa).

N-acetyltransferase domains lie at 12–156 (TSMR…VDVT) and 169–330 (VAVR…HGTP). Position 44 (glutamate 44) interacts with 1D-myo-inositol 2-(L-cysteinylamino)-2-deoxy-alpha-D-glucopyranoside. Residue 91–93 (LVV) participates in acetyl-CoA binding. 1D-myo-inositol 2-(L-cysteinylamino)-2-deoxy-alpha-D-glucopyranoside contacts are provided by glutamate 196, lysine 235, and glutamate 253. Residues 257 to 259 (VGV) and 264 to 270 (QGLGMGR) each bind acetyl-CoA. Tyrosine 291 contacts 1D-myo-inositol 2-(L-cysteinylamino)-2-deoxy-alpha-D-glucopyranoside. 296–301 (NTVAVH) lines the acetyl-CoA pocket. Positions 320 to 348 (PPAGSPAHGTPLVRVTDTPSSPGDATMGS) are disordered. The segment covering 336-348 (DTPSSPGDATMGS) has biased composition (polar residues).

The protein belongs to the acetyltransferase family. MshD subfamily. Monomer.

It catalyses the reaction 1D-myo-inositol 2-(L-cysteinylamino)-2-deoxy-alpha-D-glucopyranoside + acetyl-CoA = mycothiol + CoA + H(+). In terms of biological role, catalyzes the transfer of acetyl from acetyl-CoA to desacetylmycothiol (Cys-GlcN-Ins) to form mycothiol. The protein is Mycothiol acetyltransferase of Cellulomonas flavigena (strain ATCC 482 / DSM 20109 / BCRC 11376 / JCM 18109 / NBRC 3775 / NCIMB 8073 / NRS 134).